A 195-amino-acid chain; its full sequence is PABIR family member 1 (195 aa).

The protein belongs to the FAM122 family.

This chain is PABIR family member 1, found in Homo sapiens (Human).